The primary structure comprises 455 residues: Phosphomethylpyrimidine synthase (455 aa).

Residues Asn80, Met109, Tyr139, His175, 195-197 (SRG), 236-239 (DALR), and Glu275 contribute to the substrate site. His279 lines the Zn(2+) pocket. Residue Tyr302 coordinates substrate. His343 is a Zn(2+) binding site. 3 residues coordinate [4Fe-4S] cluster: Cys423, Cys426, and Cys431.

This sequence belongs to the ThiC family. Requires [4Fe-4S] cluster as cofactor.

The catalysed reaction is 5-amino-1-(5-phospho-beta-D-ribosyl)imidazole + S-adenosyl-L-methionine = 4-amino-2-methyl-5-(phosphooxymethyl)pyrimidine + CO + 5'-deoxyadenosine + formate + L-methionine + 3 H(+). It participates in cofactor biosynthesis; thiamine diphosphate biosynthesis. In terms of biological role, catalyzes the synthesis of the hydroxymethylpyrimidine phosphate (HMP-P) moiety of thiamine from aminoimidazole ribotide (AIR) in a radical S-adenosyl-L-methionine (SAM)-dependent reaction. This Synechococcus sp. (strain JA-3-3Ab) (Cyanobacteria bacterium Yellowstone A-Prime) protein is Phosphomethylpyrimidine synthase.